The sequence spans 402 residues: Septin CDC11 (402 aa).

N-acetylmethionine is present on methionine 1. Serine 4 carries the phosphoserine modification. A Basic motif motif is present at residues 14–21 (RKRKTLKK). A Septin-type G domain is found at 21–307 (KSINFSIMII…ENYRTEALSG (287 aa)). The interval 31 to 38 (GESGSGRS) is G1 motif. 31 to 38 (GESGSGRS) lines the GTP pocket. The tract at residues 89–92 (DTPN) is G3 motif. The interval 171 to 174 (SKAD) is G4 motif. Residues 172 to 180 (KADSLTPKE) and glycine 233 contribute to the GTP site. Positions 318–376 (AKQEISESDYLMKEEQIKLEEERLRKFEERVHQDLINKRKELLERENELKEIEKRLLAE) form a coiled coil. Serine 394 carries the phosphoserine; by CDC28 modification. Serine 395 is subject to Phosphoserine; by GIN4.

It belongs to the TRAFAC class TrmE-Era-EngA-EngB-Septin-like GTPase superfamily. Septin GTPase family. As to quaternary structure, component of the septin complex which consists of CDC3, CDC10, CDC11, CDC12 and probably SEP7. The purified septin complex appeared to have a stoichiometry of 2 CDC3, 1 to 2 CDC10, 1 CDC11, 2 CDC12, and 1 or none SEP7 subunit. Interacts with HSL1. Post-translationally, hyphal induction causes immediate phosphorylation at Ser-395 by GIN4 and at Ser-394 by CDC28-CCN1. GIN4 phosphorylation at Ser-395 primes CDC11 for further phosphorylation by CDC28-CCN1. CDC28-HGC1 then maintains CDC11 phosphorylation throughout hyphal growth. Ser-4 is also phosphorylated in yeast cells but not hyphal cells. In terms of processing, met-1 is acetylated.

The protein resides in the bud neck. Septins are GTPases involved in cytokinesis that assemble early in the cell cycle as a patch at the incipient bud site and form a ring before bud emergence, which transforms into an hour-glass shaped collar of cortical filaments that spans both sides of the mother-bud neck. This collar persists until just before cytokinesis, when it splits into two rings that occupy opposite sides of the neck. The septins at the bud neck serve as a structural scaffold that recruits different components involved in diverse processes at specific stages during the cell cycle. Many proteins bind asymmetrically to the septin collar. The septin assembly is regulated by protein kinase GIN4. Septins are also involved in cell morphogenesis, chlamydospores morphogenesis, bud site selection, chitin deposition, cell cycle regulation, cell compartmentalization, and spore wall formation. CDC11 is required for the correct localization of SEC3 at bud tips and bud necks. Plays a key role in invasive growth and virulence. In Candida albicans (strain SC5314 / ATCC MYA-2876) (Yeast), this protein is Septin CDC11 (CDC11).